The primary structure comprises 373 residues: ATP phosphoribosyltransferase regulatory subunit (373 aa).

It belongs to the class-II aminoacyl-tRNA synthetase family. HisZ subfamily. Heteromultimer composed of HisG and HisZ subunits.

Its subcellular location is the cytoplasm. It participates in amino-acid biosynthesis; L-histidine biosynthesis; L-histidine from 5-phospho-alpha-D-ribose 1-diphosphate: step 1/9. Its function is as follows. Required for the first step of histidine biosynthesis. May allow the feedback regulation of ATP phosphoribosyltransferase activity by histidine. The protein is ATP phosphoribosyltransferase regulatory subunit of Rhizobium etli (strain ATCC 51251 / DSM 11541 / JCM 21823 / NBRC 15573 / CFN 42).